Here is a 341-residue protein sequence, read N- to C-terminus: tRNA N6-adenosine threonylcarbamoyltransferase (341 aa).

Residues H120 and H124 each coordinate Fe cation. Residues 142 to 146 (VVSGG), D175, G188, D192, and N281 contribute to the substrate site. Residue D310 participates in Fe cation binding.

Belongs to the KAE1 / TsaD family. Fe(2+) serves as cofactor.

Its subcellular location is the cytoplasm. It carries out the reaction L-threonylcarbamoyladenylate + adenosine(37) in tRNA = N(6)-L-threonylcarbamoyladenosine(37) in tRNA + AMP + H(+). Functionally, required for the formation of a threonylcarbamoyl group on adenosine at position 37 (t(6)A37) in tRNAs that read codons beginning with adenine. Is involved in the transfer of the threonylcarbamoyl moiety of threonylcarbamoyl-AMP (TC-AMP) to the N6 group of A37, together with TsaE and TsaB. TsaD likely plays a direct catalytic role in this reaction. In Anoxybacillus flavithermus (strain DSM 21510 / WK1), this protein is tRNA N6-adenosine threonylcarbamoyltransferase.